Reading from the N-terminus, the 489-residue chain is Phosphoenolpyruvate carboxykinase (ATP) (489 aa).

Substrate-binding residues include R53 and Y159. Residues H185, G208–T216, D258, R300, K409–I410, and S415 each bind ATP. Position 300 (R300) interacts with substrate.

Belongs to the phosphoenolpyruvate carboxykinase (ATP) family.

It localises to the cytoplasm. It catalyses the reaction oxaloacetate + ATP = phosphoenolpyruvate + ADP + CO2. The protein operates within carbohydrate biosynthesis; gluconeogenesis. Its function is as follows. Involved in the gluconeogenesis. Catalyzes the conversion of oxaloacetate (OAA) to phosphoenolpyruvate (PEP) through direct phosphoryl transfer between the nucleoside triphosphate and OAA. This is Phosphoenolpyruvate carboxykinase (ATP) from Aeropyrum pernix (strain ATCC 700893 / DSM 11879 / JCM 9820 / NBRC 100138 / K1).